The following is a 676-amino-acid chain: Ribosome quality control complex subunit TCF25 (676 aa).

Disordered regions lie at residues 1-59 (MSRR…VRVN) and 85-147 (LTDA…ENGL). Over residues 123–136 (GKLRKKKKKQKNKK) the composition is skewed to basic residues. The residue at position 602 (serine 602) is a Phosphoserine.

It belongs to the TCF25 family. In terms of assembly, component of the ribosome quality control complex (RQC), composed of the E3 ubiquitin ligase LTN1, TCF25 and NEMF associated with the 60S ribosomal subunit. Interacts (via C-terminus) with NFATC4; the interaction leads to suppresson of NFATC4 transcription factor activity and is reduced following stimulation with angiotensin-2. Interacts with XIAP. As to expression, in the embryo, widely expressed with highest levels in brain. In the adult, highest expression is found in the heart. Repressed in cardiac tissue of patients with heart failure (at protein level). mRNA levels in the heart are unchanged in patients with heart failure.

The protein resides in the nucleus. It is found in the cytoplasm. Its subcellular location is the cytosol. Component of the ribosome quality control complex (RQC), a ribosome-associated complex that mediates ubiquitination and extraction of incompletely synthesized nascent chains for proteasomal degradation. In the RQC complex, required to promote formation of 'Lys-48'-linked polyubiquitin chains during ubiquitination of incompletely synthesized proteins by LTN1. May negatively regulate the calcineurin-NFAT signaling cascade by suppressing the activity of transcription factor NFATC4. May play a role in cell death control. In Homo sapiens (Human), this protein is Ribosome quality control complex subunit TCF25.